A 165-amino-acid polypeptide reads, in one-letter code: Lipoprotein signal peptidase (165 aa).

The next 3 helical transmembrane spans lie at 9 to 29 (FLAI…VLLY), 69 to 89 (KYFL…FLFL), and 98 to 118 (IRFS…DIVF). Active-site residues include aspartate 124 and aspartate 142. A helical transmembrane segment spans residues 133-153 (WFFPTFNFADIFISLGTLIFI).

Belongs to the peptidase A8 family.

It is found in the cell inner membrane. It catalyses the reaction Release of signal peptides from bacterial membrane prolipoproteins. Hydrolyzes -Xaa-Yaa-Zaa-|-(S,diacylglyceryl)Cys-, in which Xaa is hydrophobic (preferably Leu), and Yaa (Ala or Ser) and Zaa (Gly or Ala) have small, neutral side chains.. It functions in the pathway protein modification; lipoprotein biosynthesis (signal peptide cleavage). Functionally, this protein specifically catalyzes the removal of signal peptides from prolipoproteins. The polypeptide is Lipoprotein signal peptidase (Chlamydia abortus (strain DSM 27085 / S26/3) (Chlamydophila abortus)).